Reading from the N-terminus, the 178-residue chain is Large ribosomal subunit protein uL6 (178 aa).

Belongs to the universal ribosomal protein uL6 family. As to quaternary structure, part of the 50S ribosomal subunit.

In terms of biological role, this protein binds to the 23S rRNA, and is important in its secondary structure. It is located near the subunit interface in the base of the L7/L12 stalk, and near the tRNA binding site of the peptidyltransferase center. This is Large ribosomal subunit protein uL6 from Lactococcus lactis subsp. lactis (strain IL1403) (Streptococcus lactis).